The following is a 319-amino-acid chain: Homoserine kinase (319 aa).

100 to 110 (PLSSGMGSSAS) serves as a coordination point for ATP.

The protein belongs to the GHMP kinase family. Homoserine kinase subfamily.

Its subcellular location is the cytoplasm. It catalyses the reaction L-homoserine + ATP = O-phospho-L-homoserine + ADP + H(+). The protein operates within amino-acid biosynthesis; L-threonine biosynthesis; L-threonine from L-aspartate: step 4/5. Its function is as follows. Catalyzes the ATP-dependent phosphorylation of L-homoserine to L-homoserine phosphate. This is Homoserine kinase from Chloroherpeton thalassium (strain ATCC 35110 / GB-78).